The sequence spans 366 residues: Methyltransferase calH (366 aa).

S-adenosyl-L-methionine-binding positions include threonine 189, aspartate 216, and 245-246 (NA).

It belongs to the class I-like SAM-binding methyltransferase superfamily.

It participates in secondary metabolite biosynthesis. In terms of biological role, methyltransferase; part of the gene cluster that mediates the biosynthesis of calbistrin A and related compounds. Calbistrin A is a secondary metabolite with an interesting structure that was recently found to have bioactivity against leukemia cells. It consists of two polyketides linked by an ester bond: a bicyclic decalin containing polyketide and a linear 12 carbon dioic acid structure. The polyketide synthase calA is probably responsible for forming the decalin moiety. Because calA lacks a designated enoylreductase (ER) domain, the required activity is provided by the trans-enoyl reductase calK. Following release from the PKS, calF then probably catalyzes the oxidation and the subsequent Diels Alder cycloisomerization that lead to the formation of the decalin moiety. The decalin polyketide backbone includes two C-methyl groups, at C7 and C11 in backbone, of which the C7 position is probably methylated by the methyltransferase domain of calA. A candidate for adding the methyl group at C11, if not done by CalA, is the cluster methyltransferase calH. Several additional tailoring enzymes within the cluster could be involved in the modification of the decalin polyketide product. Those include the 3 cytochrome P450 monooxygenases CalE, CalG and CalL, of which one might be responsible for the introduction of the extra hydroxyl group attached to the backbone of the decalin moiety, at position C9 in the backbone, that allows for attachment of the linear moiety. One tailoring enzyme activity that is expected to be involved in biosynthesis of calbistrin is an acyltransferase for connecting the two polyketide synthase products, and which could be performed by the cluster acyltransferase calJ. The enzyme responsible for the biosynthesis of the linear moiety, probably a second PKS, has not been identified yet. In Penicillium decumbens, this protein is Methyltransferase calH.